A 94-amino-acid chain; its full sequence is Co-chaperonin GroES (94 aa).

It belongs to the GroES chaperonin family. In terms of assembly, heptamer of 7 subunits arranged in a ring. Interacts with the chaperonin GroEL.

The protein resides in the cytoplasm. In terms of biological role, together with the chaperonin GroEL, plays an essential role in assisting protein folding. The GroEL-GroES system forms a nano-cage that allows encapsulation of the non-native substrate proteins and provides a physical environment optimized to promote and accelerate protein folding. GroES binds to the apical surface of the GroEL ring, thereby capping the opening of the GroEL channel. This is Co-chaperonin GroES from Streptococcus pneumoniae (strain 70585).